Consider the following 628-residue polypeptide: Netrin-4 (628 aa).

The signal sequence occupies residues 1-18 (MGSCARLLLLWGCTVVAA). Positions 30 to 261 (CEKACNPRMG…AIYDFIVKGS (232 aa)) constitute a Laminin N-terminal domain. N-linked (GlcNAc...) asparagine glycans are attached at residues asparagine 56 and asparagine 163. Intrachain disulfides connect cysteine 262-cysteine 271, cysteine 264-cysteine 293, cysteine 295-cysteine 304, cysteine 307-cysteine 329, cysteine 332-cysteine 341, cysteine 334-cysteine 359, cysteine 362-cysteine 371, cysteine 374-cysteine 392, cysteine 395-cysteine 413, cysteine 397-cysteine 420, cysteine 422-cysteine 431, and cysteine 434-cysteine 446. 3 Laminin EGF-like domains span residues 262–331 (CFCN…ECRT), 332–394 (CKCN…ACKP), and 395–448 (CSCH…GCRP). Asparagine 353 carries an N-linked (GlcNAc...) asparagine glycan. Asparagine 483 carries an N-linked (GlcNAc...) asparagine glycan. 2 disulfides stabilise this stretch: cysteine 506–cysteine 576 and cysteine 520–cysteine 627. One can recognise an NTR domain in the interval 506 to 627 (CECKEQTLGN…KVMDILKREC (122 aa)).

In terms of assembly, may form a homodimer.

It is found in the secreted. It localises to the extracellular space. Its subcellular location is the extracellular matrix. Functionally, may play an important role in neural, kidney and vascular development. The protein is Netrin-4 (NTN4) of Pongo abelii (Sumatran orangutan).